Consider the following 79-residue polypeptide: Protein RALF-like 15 (79 aa).

The first 28 residues, 1-28 (MGMSKSIKVIVSLALILFLALAATKVEA), serve as a signal peptide directing secretion. Cystine bridges form between cysteine 46/cysteine 54 and cysteine 66/cysteine 72.

This sequence belongs to the plant rapid alkalinization factor (RALF) family.

It is found in the secreted. Cell signaling peptide that may regulate plant stress, growth, and development. Mediates a rapid alkalinization of extracellular space by mediating a transient increase in the cytoplasmic Ca(2+) concentration leading to a calcium-dependent signaling events through a cell surface receptor and a concomitant activation of some intracellular mitogen-activated protein kinases. In Arabidopsis thaliana (Mouse-ear cress), this protein is Protein RALF-like 15 (RALFL15).